The chain runs to 305 residues: Oxygen-dependent coproporphyrinogen-III oxidase (305 aa).

Ser-99 is a binding site for substrate. A divalent metal cation contacts are provided by His-103 and His-113. The active-site Proton donor is the His-113. 115–117 (NVR) contributes to the substrate binding site. A divalent metal cation-binding residues include His-152 and His-182. The important for dimerization stretch occupies residues 247-282 (YVEFNLVLDRGTLFGLQTGGRTESILMSMPPLARWE). 265–267 (GGR) is a binding site for substrate.

Belongs to the aerobic coproporphyrinogen-III oxidase family. As to quaternary structure, homodimer. A divalent metal cation serves as cofactor.

The protein resides in the cytoplasm. The enzyme catalyses coproporphyrinogen III + O2 + 2 H(+) = protoporphyrinogen IX + 2 CO2 + 2 H2O. It participates in porphyrin-containing compound metabolism; protoporphyrin-IX biosynthesis; protoporphyrinogen-IX from coproporphyrinogen-III (O2 route): step 1/1. Involved in the heme biosynthesis. Catalyzes the aerobic oxidative decarboxylation of propionate groups of rings A and B of coproporphyrinogen-III to yield the vinyl groups in protoporphyrinogen-IX. The polypeptide is Oxygen-dependent coproporphyrinogen-III oxidase (Vibrio cholerae serotype O1 (strain M66-2)).